The chain runs to 600 residues: Glutamine--fructose-6-phosphate aminotransferase [isomerizing] (600 aa).

The active-site Nucleophile; for GATase activity is C2. Positions 2–217 (CGIVGFIGEQ…DKEIVIVMKE (216 aa)) constitute a Glutamine amidotransferase type-2 domain. SIS domains follow at residues 283–422 (IRNA…AKGE) and 452–590 (LAKQ…VDKP). K595 acts as the For Fru-6P isomerization activity in catalysis.

As to quaternary structure, homodimer.

It localises to the cytoplasm. The enzyme catalyses D-fructose 6-phosphate + L-glutamine = D-glucosamine 6-phosphate + L-glutamate. Catalyzes the first step in hexosamine metabolism, converting fructose-6P into glucosamine-6P using glutamine as a nitrogen source. This Bacillus thuringiensis subsp. konkukian (strain 97-27) protein is Glutamine--fructose-6-phosphate aminotransferase [isomerizing].